We begin with the raw amino-acid sequence, 1202 residues long: MDWTGARARTSWGKRPQTAALGLAATFRHLNTDDHRPIEQTTQTPYSLHRPLPPPSGEPATDTPTHSSCPAPPIAVPSSLLLPRTTHPSSRSSHICACHTPVTARHSPNRLCPVSLPTPTPRSMAQGTKAPAAAMPPNSSVLNMPALNAVNRKKQKRREKEAAKKAAQDPSPPATLRNGVSSGSTHLPANAAHTRQPAPHYDDPELDDPQYDDEDDADFYSDEEAEHYEHAYGTNGHYQQGYAHAPIPSSSKKPRKKKKGAAAHPPHAYTQHVAPRHSPAPNHSMVTSGSKSIWNTSTVEERERIREFWLSLGEDERKSLVKIEKEAVLRKMKEQQKHSCSCSVCGRKRTAIEEELEVLYDAYYEELEQYAHLQQDVGRFLPDANFGHVRSAPHPRPLMTTHPPPGPYDDEEEDEYSGEDDEEDIFKYLPPPDAADFLRFGSSLTVKGGILTVADDLLKNDGKKFIEMMEQLAERRMQREEEANFHAHPSMHRYNSAHNHAPQPEEEEYDDEVDEEEGFEDEDYEEDDEDEDEAMTEEQRMEEGRRMFQIFAARMFEQRVLQAYREKVAAERQKRLLEELEEENEKKDQKEAKKAKEAQKRKEKKEKQRQIKAEEKAKKDAELAAKEAELKAAEEKRLEEQRKKREEQRKKKEAERKAQEEEKQRKEAERQKRLQEERDRQQELERKAREQKALEKKVKDDAKRKERDRAGSQGEGGSGRRRPTTTASARSVKVCRSPHGILSSFVPKAPTPSRPRQTSRQGSHGSSPKTPQVAPGTSKSMSPTSQAQGNMMPKSILTKPANSQHAGHHPLGQPSSPMPPIGPPPGLSGPPGLSMGLPPGLNGFPGPGSMLPNMMSPRPGMPFFPQPPVPQAFRGFPPPGMAGPRGFPMDGPPGLGPMPGFAGPNQAPPFGMGPPTQHSRQGSGSFASMDVPISAPSVQPIHRPAPIQRPSSVKPHDSNKHGQDSDVDELADHLGSKALLDEEDVPEIPDRRSSVQQHGSMRSMPIGFGFPDAPNSHQSTAFNGFGSANTASIWGTPPSQAFSSAAGPWGNSPTSGFFTNPLTMSSPRVSDHRAPNEPRLVWLRRVICTVCKMLSSRHAGPDGFIDANEVQQQLDAFRDPREPVVTQEELKEACDIIDGTHNNGGGSLEYKNLGDGRLSHIKFVDTTGPPPALGEIGSPIPSHSLPVAGFGGRFPGLGPQGF.

Disordered regions lie at residues 28–217 (RHLN…EDDA), 236–291 (GHYQ…SGSK), 390–423 (RSAPHPRPLMTTHPPPGPYDDEEEDEYSGEDDEE), 487–543 (AHPS…RMEE), 579–852 (ELEE…SMLP), 904–967 (PNQA…DSDV), and 979–1015 (LLDEEDVPEIPDRRSSVQQHGSMRSMPIGFGFPDAPN). Residues 158–167 (REKEAAKKAA) show a composition bias toward basic and acidic residues. A compositionally biased stretch (polar residues) spans 178 to 187 (NGVSSGSTHL). A compositionally biased stretch (acidic residues) spans 204–217 (PELDDPQYDDEDDA). Over residues 252-261 (KKPRKKKKGA) the composition is skewed to basic residues. 2 stretches are compositionally biased toward acidic residues: residues 408–423 (YDDEEEDEYSGEDDEE) and 504–536 (PEEEEYDDEVDEEEGFEDEDYEEDDEDEDEAMT). Residues 557–704 (EQRVLQAYRE…EKKVKDDAKR (148 aa)) are a coiled coil. The span at 579–710 (ELEEENEKKD…DAKRKERDRA (132 aa)) shows a compositional bias: basic and acidic residues. Residues 754–789 (RPRQTSRQGSHGSSPKTPQVAPGTSKSMSPTSQAQG) show a composition bias toward polar residues. A compositionally biased stretch (pro residues) spans 816–828 (SPMPPIGPPPGLS). A compositionally biased stretch (low complexity) spans 830-848 (PPGLSMGLPPGLNGFPGPG). Residues 916 to 926 (TQHSRQGSGSF) are compositionally biased toward polar residues. A compositionally biased stretch (basic and acidic residues) spans 954 to 967 (KPHDSNKHGQDSDV).

The protein belongs to the NST1 family.

It is found in the cytoplasm. Functionally, may act as a negative regulator of salt tolerance. This is Stress response protein NST1 (NST1) from Phaeosphaeria nodorum (strain SN15 / ATCC MYA-4574 / FGSC 10173) (Glume blotch fungus).